Here is a 516-residue protein sequence, read N- to C-terminus: Cyclic AMP response element-binding protein A (516 aa).

3 positions are modified to phosphoserine: Ser-75, Ser-79, and Ser-82. Disordered stretches follow at residues 213-237 (KDEPMSPDSSCPASPTSQASSSQHQ), 294-338 (KSEK…HLFA), and 353-408 (PAGG…KGST). A compositionally biased stretch (low complexity) spans 221 to 237 (SSCPASPTSQASSSQHQ). Positions 361–392 (RVSRTAASITRSSSGSASASGSSTSSTVTTTR) are enriched in low complexity. Residues 441–504 (SLKKIRRKIK…ANLLSQLHKL (64 aa)) enclose the bZIP domain. Positions 443 to 463 (KKIRRKIKNKISAQESRRKKK) are basic motif. A leucine-zipper region spans residues 469–476 (LERRVEIL).

It belongs to the bZIP family. In terms of assembly, may bind DNA as heterodimers with other bZIP proteins. In all cell types examined, including developing salivary gland in embryos and in adults, brain and optic lobe cell bodies, salivary gland, midgut epithelial cells of the cardia, female ovarian columnar follicle cells and male seminal vesicle, ejaculatory duct, and ejaculatory bulb.

The protein resides in the nucleus. Transcriptional activator. Binds to fat body-specific enhancers of alcohol dehydrogenase (ADH) and yolk protein genes. BBF-2 may play a role in fat body gene expression. It binds the consensus sequence 5'-T[AC]NACGTAN[TG]C-3'. The sequence is that of Cyclic AMP response element-binding protein A (CrebA) from Drosophila melanogaster (Fruit fly).